The following is a 273-amino-acid chain: Diphthine methyl ester synthase (273 aa).

Residues L10, D87, G90, S115–I116, L166, V224, and H249 each bind S-adenosyl-L-methionine.

Belongs to the diphthine synthase family.

The enzyme catalyses 2-[(3S)-amino-3-carboxypropyl]-L-histidyl-[translation elongation factor 2] + 4 S-adenosyl-L-methionine = diphthine methyl ester-[translation elongation factor 2] + 4 S-adenosyl-L-homocysteine + 3 H(+). Its pathway is protein modification; peptidyl-diphthamide biosynthesis. In terms of biological role, S-adenosyl-L-methionine-dependent methyltransferase that catalyzes four methylations of the modified target histidine residue in translation elongation factor 2 (EF-2), to form an intermediate called diphthine methyl ester. The four successive methylation reactions represent the second step of diphthamide biosynthesis. This Dictyostelium discoideum (Social amoeba) protein is Diphthine methyl ester synthase (dph5).